Reading from the N-terminus, the 403-residue chain is MSEKGRLFTSESVTEGHPDKICDAISDSVLDALLAQDPRSRVAVETLVTTGQVHVVGEVTTTAKEAFADITNTVRERILDIGYDSSDKGFDGASCGVNIGIGAQSPDIAQGVDTAHETRVEGAADPLDAQGAGDQGLMFGYAIKDTPEMMPLPIALAHRLSRRLTEVRKSGVLPYLRPDGKTQVTIEYEDDVPVRLDTVVVSTQHAADIDLENTLTPDIREKVLNTVLDDLAHDTLDTSSTRLLVNPTGKFVVGGPMGDAGLTGRKIIVDTYGGWARHGGGAFSGKDPSKVDRSAAYAMRWVAKNIVAAGLAERVEVQVAYAIGKAAPVGLFVETFGTATVDPVKIEKIVPEVFDLRPGAIIRDLDLLRPIYAQTAAYGHFGRTDVELPWEQLNKVDELKRAV.

An ATP-binding site is contributed by His17. Asp19 contacts Mg(2+). Glu45 serves as a coordination point for K(+). Residues Glu58 and Gln104 each contribute to the L-methionine site. Residues Gln104–Thr114 are flexible loop. ATP contacts are provided by residues Asp179–Lys181, Lys250–Phe251, Asp259, Arg265–Lys266, Ala282, and Lys286. An L-methionine-binding site is contributed by Asp259. L-methionine is bound at residue Lys290.

It belongs to the AdoMet synthase family. In terms of assembly, homotetramer; dimer of dimers. Mg(2+) serves as cofactor. It depends on K(+) as a cofactor.

The protein localises to the cytoplasm. It catalyses the reaction L-methionine + ATP + H2O = S-adenosyl-L-methionine + phosphate + diphosphate. Its pathway is amino-acid biosynthesis; S-adenosyl-L-methionine biosynthesis; S-adenosyl-L-methionine from L-methionine: step 1/1. In terms of biological role, catalyzes the formation of S-adenosylmethionine (AdoMet) from methionine and ATP. The overall synthetic reaction is composed of two sequential steps, AdoMet formation and the subsequent tripolyphosphate hydrolysis which occurs prior to release of AdoMet from the enzyme. The protein is S-adenosylmethionine synthase of Mycolicibacterium paratuberculosis (strain ATCC BAA-968 / K-10) (Mycobacterium paratuberculosis).